The chain runs to 236 residues: UPF0257 lipoprotein YnfC (236 aa).

Positions 1-16 are cleaved as a signal peptide; the sequence is MKYKLLPCLLAIFLTG. Cysteine 17 carries N-palmitoyl cysteine lipidation. Cysteine 17 carries S-diacylglycerol cysteine lipidation.

The protein belongs to the UPF0257 family.

It localises to the cell membrane. This is UPF0257 lipoprotein YnfC from Escherichia coli O7:K1 (strain IAI39 / ExPEC).